We begin with the raw amino-acid sequence, 210 residues long: uncharacterized protein (210 aa).

The next 5 helical transmembrane spans lie at 42–62, 66–86, 126–146, 147–167, and 189–209; these read ITLG…VLFV, ALHG…GFLM, VVVY…EMWQ, IILA…VISL, and AGIV…NEII.

The protein belongs to the Rht family.

The protein localises to the cell membrane. This is an uncharacterized protein from Haemophilus influenzae (strain ATCC 51907 / DSM 11121 / KW20 / Rd).